The following is a 237-amino-acid chain: LexA repressor (237 aa).

The H-T-H motif DNA-binding region spans 26–46; sequence FDEMKDALGLKSKSGIHRLIT. Catalysis depends on for autocatalytic cleavage activity residues S158 and K196.

This sequence belongs to the peptidase S24 family. In terms of assembly, homodimer.

It catalyses the reaction Hydrolysis of Ala-|-Gly bond in repressor LexA.. Its function is as follows. Represses a number of genes involved in the response to DNA damage (SOS response), including recA and lexA. In the presence of single-stranded DNA, RecA interacts with LexA causing an autocatalytic cleavage which disrupts the DNA-binding part of LexA, leading to derepression of the SOS regulon and eventually DNA repair. The sequence is that of LexA repressor from Rhodospirillum centenum (strain ATCC 51521 / SW).